The sequence spans 438 residues: MSHEGEEDLLEYSDNEQEIQVDNTKATEVAGNGEEAADGKDGDKKGSYVGIHSTGFKDFLLKPELSRAIIDCGFEHPSEVQQHTIPQSIHGTDVLCQAKSGLGKTAVFVLSTLQQLDPVPGEVSVVVLCNARELAYQIRNEYLRFSKYMPDVKTAVFYGGTDTRKDIELLKNKDTAPHIVVATPGRLKALVRDNNIDLSHVKNFVIDECDKVLEELDMRRDVQDIFRATPRDKQVMMFSATLSQEIRPICRRFLQNPLEIFVDDEAKLTLHGLQQYYIRLEEREKNRKLAQLLDDLEFNQVIIFVKSTLRANELTKLLNASNFPAITVHGHMRQEERIARYKAFKEFEKRICVSTDVFGRGIDIERINLAINYDMPSEADQYLHRVGRAGRFGTKGLAISLVSSKDDEEVLAKIQERFDVKITEFPEEGVDPSTYLNT.

Residues 1–19 (MSHEGEEDLLEYSDNEQEI) are compositionally biased toward acidic residues. The tract at residues 1-44 (MSHEGEEDLLEYSDNEQEIQVDNTKATEVAGNGEEAADGKDGDK) is disordered. Residues 54–82 (TGFKDFLLKPELSRAIIDCGFEHPSEVQQ) carry the Q motif motif. Positions 85-260 (IPQSIHGTDV…RRFLQNPLEI (176 aa)) constitute a Helicase ATP-binding domain. 98–105 (AKSGLGKT) provides a ligand contact to ATP. A DECD box motif is present at residues 207–210 (DECD). Residues 272 to 433 (GLQQYYIRLE…EFPEEGVDPS (162 aa)) enclose the Helicase C-terminal domain.

It belongs to the DEAD box helicase family. DECD subfamily.

Its subcellular location is the nucleus. The enzyme catalyses ATP + H2O = ADP + phosphate + H(+). ATP-binding RNA helicase involved in transcription elongation and required for the export of mRNA out of the nucleus. SUB2 also plays a role in pre-mRNA splicing and spliceosome assembly. May be involved in rDNA and telomeric silencing, and maintenance of genome integrity. This chain is ATP-dependent RNA helicase SUB2 (SUB2), found in Eremothecium gossypii (strain ATCC 10895 / CBS 109.51 / FGSC 9923 / NRRL Y-1056) (Yeast).